Consider the following 362-residue polypeptide: N5-carboxyaminoimidazole ribonucleotide synthase (362 aa).

Residues Arg85, Lys125, 130–136, 158–161, Glu166, and 244–245 each bind ATP; these read GYDGRGQ, EKFI, and NE. Residues 89–274 form the ATP-grasp domain; sequence KSLLDELNLS…QFELHLRALL (186 aa).

It belongs to the PurK/PurT family. In terms of assembly, homodimer.

The catalysed reaction is 5-amino-1-(5-phospho-beta-D-ribosyl)imidazole + hydrogencarbonate + ATP = 5-carboxyamino-1-(5-phospho-D-ribosyl)imidazole + ADP + phosphate + 2 H(+). Its pathway is purine metabolism; IMP biosynthesis via de novo pathway; 5-amino-1-(5-phospho-D-ribosyl)imidazole-4-carboxylate from 5-amino-1-(5-phospho-D-ribosyl)imidazole (N5-CAIR route): step 1/2. In terms of biological role, catalyzes the ATP-dependent conversion of 5-aminoimidazole ribonucleotide (AIR) and HCO(3)(-) to N5-carboxyaminoimidazole ribonucleotide (N5-CAIR). This Haemophilus influenzae (strain ATCC 51907 / DSM 11121 / KW20 / Rd) protein is N5-carboxyaminoimidazole ribonucleotide synthase.